Reading from the N-terminus, the 45-residue chain is MGLILTRMILNCGCGSSCKCGDSCSCEKNYNKECDNCSCGSNCNF.

It belongs to the metallothionein superfamily. Type 15 family.

In terms of biological role, metallothioneins have a high content of cysteine residues that bind various heavy metals. Confers tolerance to cadmium (Cd) and plays a role in Cd and zinc (Zn) homeostasis. The chain is Putative metallothionein-like protein 1B (MT1B) from Arabidopsis thaliana (Mouse-ear cress).